Here is a 334-residue protein sequence, read N- to C-terminus: MERCSVAQQFEDRFQRKFYYLRLSITDVCNFKCTYCLPDGYKPSAGRPASFLTVNEIRRVVSAFAHCGTSKVRITGGEPSLRKDFGEIIHTIAQTPGIQKVATTTNGYRLAKHIGEWREAGLTQLNVSVDSLDPRMFAQITGENRFQQVMSGIDRAFEVGFEQVKVNVVLMKNLNHLELPQFMAWIKTRPIQLRFIELMQTGEMDALFARHHVSGISIRDYLFGNGWLLKARADNDGPAQVFIHPDFQGEIGLIMPYEKDFCRSCNRLRVSALGKLHLCLFGEQGIELRDLLQDDHQENALIERIQTQLQNKAETHFLHDGNSGVTPHLASIGG.

The 227-residue stretch at 13-239 (RFQRKFYYLR…KARADNDGPA (227 aa)) folds into the Radical SAM core domain. Arginine 22 provides a ligand contact to GTP. 2 residues coordinate [4Fe-4S] cluster: cysteine 29 and cysteine 33. Tyrosine 35 provides a ligand contact to S-adenosyl-L-methionine. Cysteine 36 serves as a coordination point for [4Fe-4S] cluster. Position 73 (arginine 73) interacts with GTP. Glycine 77 serves as a coordination point for S-adenosyl-L-methionine. Threonine 104 is a binding site for GTP. Position 128 (serine 128) interacts with S-adenosyl-L-methionine. Lysine 165 is a GTP binding site. Methionine 199 contributes to the S-adenosyl-L-methionine binding site. [4Fe-4S] cluster-binding residues include cysteine 262 and cysteine 265. A GTP-binding site is contributed by 267-269 (RLR). A [4Fe-4S] cluster-binding site is contributed by cysteine 279.

Belongs to the radical SAM superfamily. MoaA family. In terms of assembly, monomer and homodimer. It depends on [4Fe-4S] cluster as a cofactor.

It catalyses the reaction GTP + AH2 + S-adenosyl-L-methionine = (8S)-3',8-cyclo-7,8-dihydroguanosine 5'-triphosphate + 5'-deoxyadenosine + L-methionine + A + H(+). Its pathway is cofactor biosynthesis; molybdopterin biosynthesis. Its function is as follows. Catalyzes the cyclization of GTP to (8S)-3',8-cyclo-7,8-dihydroguanosine 5'-triphosphate. The sequence is that of GTP 3',8-cyclase from Vibrio cholerae serotype O1 (strain M66-2).